The following is a 517-amino-acid chain: Aspartyl/glutamyl-tRNA(Asn/Gln) amidotransferase subunit B (517 aa).

Belongs to the GatB/GatE family. GatB subfamily. As to quaternary structure, heterotrimer of A, B and C subunits.

It carries out the reaction L-glutamyl-tRNA(Gln) + L-glutamine + ATP + H2O = L-glutaminyl-tRNA(Gln) + L-glutamate + ADP + phosphate + H(+). The enzyme catalyses L-aspartyl-tRNA(Asn) + L-glutamine + ATP + H2O = L-asparaginyl-tRNA(Asn) + L-glutamate + ADP + phosphate + 2 H(+). Allows the formation of correctly charged Asn-tRNA(Asn) or Gln-tRNA(Gln) through the transamidation of misacylated Asp-tRNA(Asn) or Glu-tRNA(Gln) in organisms which lack either or both of asparaginyl-tRNA or glutaminyl-tRNA synthetases. The reaction takes place in the presence of glutamine and ATP through an activated phospho-Asp-tRNA(Asn) or phospho-Glu-tRNA(Gln). The protein is Aspartyl/glutamyl-tRNA(Asn/Gln) amidotransferase subunit B of Thermobifida fusca (strain YX).